Here is a 387-residue protein sequence, read N- to C-terminus: 1-hydroxy-2-naphthoate 1,2-dioxygenasee (387 aa).

Cupin type-2 domains lie at 103–171 and 271–337; these read FQLV…VWLD and VQRL…VLLF.

In terms of assembly, homohexamer. The cofactor is Fe(2+).

It carries out the reaction 1-hydroxy-2-naphthoate + O2 = (3Z)-4-(2-carboxyphenyl)-2-oxobut-3-enoate + H(+). Its function is as follows. Dioxygenase involved in phenanthrene catabolism by mediating cleavage of 1-hydroxy-2-naphthoate. This chain is 1-hydroxy-2-naphthoate 1,2-dioxygenasee (phdI), found in Nocardioides sp. (strain KP7).